The following is a 126-amino-acid chain: MIRTMLQGKLHRVKVTQADLHYEGSCAIDQDFLEAAGILEYEAIDIYNVTNGKRFSTYAIAGERGSKIISVNGAAAHCADVGDILIIASYVTMPDEQARSWQPKVAYFDGDNEMKRLAKAVPVQVA.

Ser-25 acts as the Schiff-base intermediate with substrate; via pyruvic acid in catalysis. Ser-25 is modified (pyruvic acid (Ser)). Substrate is bound at residue Thr-57. The active-site Proton donor is Tyr-58. 73 to 75 (GAA) serves as a coordination point for substrate.

The protein belongs to the PanD family. In terms of assembly, heterooctamer of four alpha and four beta subunits. Requires pyruvate as cofactor. Post-translationally, is synthesized initially as an inactive proenzyme, which is activated by self-cleavage at a specific serine bond to produce a beta-subunit with a hydroxyl group at its C-terminus and an alpha-subunit with a pyruvoyl group at its N-terminus.

The protein resides in the cytoplasm. The enzyme catalyses L-aspartate + H(+) = beta-alanine + CO2. It functions in the pathway cofactor biosynthesis; (R)-pantothenate biosynthesis; beta-alanine from L-aspartate: step 1/1. Functionally, catalyzes the pyruvoyl-dependent decarboxylation of aspartate to produce beta-alanine. The chain is Aspartate 1-decarboxylase from Cronobacter sakazakii (strain ATCC BAA-894) (Enterobacter sakazakii).